We begin with the raw amino-acid sequence, 546 residues long: Intermembrane transport protein PqiB (546 aa).

The Cytoplasmic portion of the chain corresponds to 1-15 (MESNNGEAKIQKVKN). A helical transmembrane segment spans residues 16–36 (WSPVWIFPIVTALIGAWVLFY). Residues 37-546 (HYSHQGPEVT…KDPEPKRAKQ (510 aa)) are Periplasmic-facing. 3 MCE/MlaD regions span residues 42-133 (GPEV…LQPG), 158-217 (IRVI…NNVR), and 285-389 (HIDY…LDFY). A coiled-coil region spans residues 437-464 (IEQATSTLSESQRTMKNLQTTLDSMNKI).

The protein belongs to the PqiB family. Homohexamer. May form a complex composed of PqiA, PqiB and PqiC. Interacts with PqiC.

The protein resides in the cell inner membrane. Its function is as follows. Forms a tunnel that spans the entire periplasmic space. Could be implicated in lipid transport between the inner membrane and the outer membrane. Binds phospholipids. Required for outer membrane homeostasis. Contributes to membrane integrity. The protein is Intermembrane transport protein PqiB of Escherichia coli (strain K12).